The chain runs to 210 residues: Orotate phosphoribosyltransferase (210 aa).

5-phospho-alpha-D-ribose 1-diphosphate-binding positions include arginine 96, lysine 100, histidine 102, and 122–130 (EDLISTGGS). An orotate-binding site is contributed by serine 126.

The protein belongs to the purine/pyrimidine phosphoribosyltransferase family. PyrE subfamily. As to quaternary structure, homodimer. It depends on Mg(2+) as a cofactor.

The catalysed reaction is orotidine 5'-phosphate + diphosphate = orotate + 5-phospho-alpha-D-ribose 1-diphosphate. It functions in the pathway pyrimidine metabolism; UMP biosynthesis via de novo pathway; UMP from orotate: step 1/2. Catalyzes the transfer of a ribosyl phosphate group from 5-phosphoribose 1-diphosphate to orotate, leading to the formation of orotidine monophosphate (OMP). This Streptococcus pneumoniae serotype 4 (strain ATCC BAA-334 / TIGR4) protein is Orotate phosphoribosyltransferase.